A 354-amino-acid chain; its full sequence is Guanine nucleotide-binding protein G(q) subunit alpha (354 aa).

S-palmitoyl cysteine attachment occurs at residues C3 and C4. A G-alpha domain is found at 32–354; the sequence is RELKLLLLGT…QLNLKEYNLV (323 aa). Residues 35 to 48 are G1 motif; the sequence is KLLLLGTGESGKST. GTP is bound by residues 40-47, 174-180, 199-203, 269-272, and A326; these read GTGESGKS, LRVRVPT, DVGGQ, and NKKD. Mg(2+)-binding residues include S47 and T180. Positions 172–180 are G2 motif; sequence DILRVRVPT. The tract at residues 195-204 is G3 motif; that stretch reads FRMVDVGGQR. Residues 265-272 are G4 motif; that stretch reads ILFLNKKD. The interval 324-329 is G5 motif; sequence TCATDT.

This sequence belongs to the G-alpha family. G(q) subfamily. As to quaternary structure, g proteins are composed of 3 units; alpha, beta and gamma. The alpha chain contains the guanine nucleotide binding site. A high concentration was found in the retinal light-sensitive outer segment.

Its function is as follows. Guanine nucleotide-binding proteins (G proteins) are involved as modulators or transducers in various transmembrane signaling systems. In terms of biological role, the G(q) alpha subunit is involved in the light-dependent activation of phospholipase C. The sequence is that of Guanine nucleotide-binding protein G(q) subunit alpha from Loligo forbesii (Veined squid).